Here is a 153-residue protein sequence, read N- to C-terminus: MDSGTKVKKGAAGRRSGGGPKKKPVSRSVKSGLQFPVGRIGRYLKKGRYSKRVGTGAPVYLAAVLEYLAAEVLELAGNAARDNKKNRIIPRHVLLAVRNDEELGTLLKGVTIAHGGVLPNINPILLPKKSEKAASTTKTPKSPSKATKSPKKS.

The segment covering 1-12 (MDSGTKVKKGAA) has biased composition (basic residues). Disordered stretches follow at residues 1–30 (MDSG…RSVK) and 129–153 (KSEK…PKKS). The span at 133 to 147 (AASTTKTPKSPSKAT) shows a compositional bias: low complexity. An SPKK motif motif is present at residues 149 to 152 (SPKK).

Belongs to the histone H2A family. The nucleosome is a histone octamer containing two molecules each of H2A, H2B, H3 and H4 assembled in one H3-H4 heterotetramer and two H2A-H2B heterodimers. The octamer wraps approximately 147 bp of DNA. Not ubiquitinated.

Its subcellular location is the nucleus. It is found in the chromosome. Functionally, core component of nucleosome. Nucleosomes wrap and compact DNA into chromatin, limiting DNA accessibility to the cellular machineries which require DNA as a template. Histones thereby play a central role in transcription regulation, DNA repair, DNA replication and chromosomal stability. DNA accessibility is regulated via a complex set of post-translational modifications of histones, also called histone code, and nucleosome remodeling. The chain is Probable histone H2A.4 from Arabidopsis thaliana (Mouse-ear cress).